The following is a 1744-amino-acid chain: Complement C4-A (1744 aa).

The signal sequence occupies residues 1-19 (MRLLWGLIWASSFFTLSLQ). The cysteines at positions 68 and 97 are disulfide-linked. An N-linked (GlcNAc...) asparagine glycan is attached at Asn-226. Cys-635 and Cys-669 are oxidised to a cystine. A propeptide spanning residues 676-679 (RKKR) is cleaved from the precursor. 3 disulfide bridges follow: Cys-702–Cys-728, Cys-703–Cys-735, and Cys-716–Cys-736. The 35-residue stretch at 702-736 (CCQDGVTRLPMMRSCEQRAARVQQPDCREPFLSCC) folds into the Anaphylatoxin-like domain. Asn-862 carries an N-linked (GlcNAc...) asparagine glycan. A Phosphoserine; by FAM20C modification is found at Ser-918. The segment at residues 1010–1013 (CGEQ) is a cross-link (isoglutamyl cysteine thioester (Cys-Gln)). Thr-1244 carries O-linked (GalNAc...) threonine glycosylation. Asn-1328 carries an N-linked (GlcNAc...) (complex) asparagine glycan. N-linked (GlcNAc...) asparagine glycosylation occurs at Asn-1391. A sulfotyrosine mark is found at Tyr-1417, Tyr-1420, and Tyr-1422. A propeptide spanning residues 1447–1453 (RRNRRRR) is cleaved from the precursor. 5 cysteine pairs are disulfide-bonded: Cys-1471–Cys-1535, Cys-1583–Cys-1588, Cys-1595–Cys-1673, Cys-1618–Cys-1742, and Cys-1718–Cys-1727. The NTR domain occupies 1595–1742 (CPRQRRALER…FLQEYGTQGC (148 aa)).

In terms of assembly, complement circulates in blood as a disulfide-linked trimer of an alpha, beta and gamma chain. Complement C4b is composed of complement C4b-A, complement C4 beta and complement C4 gamma chains that are associated via disulfide bonds. Non-enzymatic component of the C3 convertase, also named C4bC2b, composed of the serine protease complement C2b (C2), as well as complement C4b. Non-enzymatic component of the C5 convertase, also named C4bC2bC3b, composed of the serine protease complement C2b (C2), complement C3b, as well as complement C4b. Prior to secretion, the single-chain precursor is enzymatically cleaved by plasminogen (PLG) to yield non-identical chains alpha, beta and gamma. During activation of the complement systems, the alpha chain is cleaved into C4a and C4b by different proteases depending on the complement pathway: C4b stays linked to the beta and gamma chains, while C4a is released in the plasma. The alpha chain is cleaved by C1S to generate C4a and C4b following activation by the classical complement system. The alpha chain is cleaved to generate C4a and C4b by MASP2 following activation by the lectin complement system. The alpha chain is cleaved by GZMK to generate C4a and C4b following activation by the GZMK complement system. Further degradation of C4b by C1 into the inactive fragments C4c and C4d blocks the generation of C3 convertase. The proteolytic cleavages often are incomplete so that many structural forms can be found in plasma. In terms of processing, upon activation, the internal thioester bond reacts with carbohydrate antigens on the target surface to form amide or ester bonds, leading to covalent association with the surface of pathogens. Post-translationally, ser-1236 of complement C4b interacts with complement C3b via a thioester linkage. N- and O-glycosylated. O-glycosylated with a core 1 or possibly core 8 glycan. Complement component C4 is expressed at highest levels in the liver, at moderate levels in the adrenal cortex, adrenal medulla, thyroid gland, and the kidney, and at lowest levels in the heart, ovary, small intestine, thymus, pancreas and spleen. The extra-hepatic sites of expression may be important for the local protection and inflammatory response.

It is found in the secreted. Its subcellular location is the synapse. The protein localises to the cell projection. The protein resides in the axon. It localises to the dendrite. It is found in the cell surface. Specifically inhibited by nanobody hC4Nb8, inhibiting the classical complement pathway. Specifically inhibited by NbB5, NbE11 and NbH9 nanobodies, and to a lesser extent by NbH11 and NbE3 nanobodies. Functionally, precursor of non-enzymatic components of the classical, lectin and GZMK complement pathways, which consist in a cascade of proteins that leads to phagocytosis and breakdown of pathogens and signaling that strengthens the adaptive immune system. Non-enzymatic component of C3 and C5 convertases. Generated following cleavage by complement proteases (C1S, MASP2 or GZMK, depending on the complement pathway), it covalently attaches to the surface of pathogens, where it acts as an opsonin that marks the surface of antigens for removal. It then recruits the serine protease complement C2b to form the C3 and C5 convertases, which cleave and activate C3 and C5, respectively, the next components of the complement pathways. Complement C4b-A isotype is responsible for effective binding to form amide bonds with immune aggregates or protein antigens, while complement C4b-B isotype catalyzes the transacylation of the thioester carbonyl group to form ester bonds with carbohydrate antigens. Its function is as follows. Putative humoral mediator released following cleavage by complement proteases (C1S, MASP2 or GZMK, depending on the complement pathway). While it is strongly similar to anaphylatoxins, its role is unclear. Was reported to act as a mediator of local inflammatory process; however these effects were probably due to contamination with C3a and/C5a anaphylatoxins in biological assays. The protein is Complement C4-A of Homo sapiens (Human).